The sequence spans 285 residues: MTSFSIEAPAKVNLTLHVVGKRDDGYHLLDSLVVFAGIGDTLEFSPAETLSLEVTGPTASQIPDGENIVLKAARLLAEATGVTKGAAIRLTKRLPVAAGIGGGSADAAAALKGLMRLWGVAPPAETLRRVALSIGADVPVCLAGTPMRMMGVGEVLEPAPTLPPAWLVLVNPLVPLHTPPVFKARTGPFSAADPLTAPPRDAKGLAEALAARRNDLTPPAITIEPVVGEVLAAIAATADCLLPRMSGSGATCFGLYAEEAQARAAAAQLGAAHPAWWIAPAQLLS.

Residue Lys11 is part of the active site. ATP is bound at residue 95 to 105 (PVAAGIGGGSA). Asp137 is an active-site residue.

It belongs to the GHMP kinase family. IspE subfamily.

The catalysed reaction is 4-CDP-2-C-methyl-D-erythritol + ATP = 4-CDP-2-C-methyl-D-erythritol 2-phosphate + ADP + H(+). Its pathway is isoprenoid biosynthesis; isopentenyl diphosphate biosynthesis via DXP pathway; isopentenyl diphosphate from 1-deoxy-D-xylulose 5-phosphate: step 3/6. Functionally, catalyzes the phosphorylation of the position 2 hydroxy group of 4-diphosphocytidyl-2C-methyl-D-erythritol. The chain is 4-diphosphocytidyl-2-C-methyl-D-erythritol kinase from Paramagnetospirillum magneticum (strain ATCC 700264 / AMB-1) (Magnetospirillum magneticum).